Consider the following 628-residue polypeptide: Glutamine--fructose-6-phosphate aminotransferase [isomerizing] (628 aa).

Catalysis depends on Cys2, which acts as the Nucleophile; for GATase activity. A Glutamine amidotransferase type-2 domain is found at Cys2 to Asp229. The interval Glu61 to Pro94 is disordered. 2 SIS domains span residues Ser301 to Thr440 and Leu473 to Pro618. The active-site For Fru-6P isomerization activity is the Lys623.

In terms of assembly, homodimer.

Its subcellular location is the cytoplasm. It catalyses the reaction D-fructose 6-phosphate + L-glutamine = D-glucosamine 6-phosphate + L-glutamate. Functionally, catalyzes the first step in hexosamine metabolism, converting fructose-6P into glucosamine-6P using glutamine as a nitrogen source. This Mycolicibacterium smegmatis (strain ATCC 700084 / mc(2)155) (Mycobacterium smegmatis) protein is Glutamine--fructose-6-phosphate aminotransferase [isomerizing].